An 807-amino-acid polypeptide reads, in one-letter code: Putative AC transposase (807 aa).

Disordered regions lie at residues 42-140 (GLKR…KKCT) and 785-807 (MDED…GSSP). The segment covering 84-98 (QSVSSSNANGTATDP) has biased composition (polar residues). Tandem repeats lie at residues 109 to 110 (PQ), 111 to 112 (PQ), 113 to 114 (PQ), 115 to 116 (PQ), 117 to 118 (PE), 119 to 120 (PQ), 121 to 122 (PQ), 123 to 124 (PQ), 125 to 126 (PE), and 127 to 128 (PE). The segment at 109–128 (PQPQPQPQPEPQPQPQPEPE) is 10 X 2 AA tandem repeats of P-[QE]. Positions 110-125 (QPQPQPQPEPQPQPQP) are enriched in pro residues.

In Zea mays (Maize), this protein is Putative AC transposase.